The sequence spans 78 residues: UPF0291 protein ABC2165 (78 aa).

A disordered region spans residues 56-78; it reads AKGNDVTPQKLKDSKAQKHKRLH.

This sequence belongs to the UPF0291 family.

The protein localises to the cytoplasm. The polypeptide is UPF0291 protein ABC2165 (Shouchella clausii (strain KSM-K16) (Alkalihalobacillus clausii)).